The following is a 474-amino-acid chain: N-lysine methyltransferase SETD6 (474 aa).

Ser-14 carries the phosphoserine modification. The region spanning 63-287 (PKVLVSRQGT…KGHEIFNTYG (225 aa)) is the SET domain. Lys-64 carries the N6-methylated lysine; by autocatalysis modification. Residue 74 to 76 (AGY) coordinates S-adenosyl-L-methionine. Trp-123 contacts substrate. Lys-180 is modified (N6-methylated lysine; by autocatalysis). Residue Tyr-224 coordinates S-adenosyl-L-methionine. Substrate is bound by residues Ser-225 and Gln-227. S-adenosyl-L-methionine-binding positions include 252–253 (NH) and Tyr-298. At Lys-373 the chain carries N6-methylated lysine; by autocatalysis.

Belongs to the class V-like SAM-binding methyltransferase superfamily. Histone-lysine methyltransferase family. SETD6 subfamily. In terms of assembly, monomer, homodimer and homotrimer; these structures are stabilized in the presence of S-adenosyl-L-methionine (SAM). Post-translationally, automethylated.

It localises to the nucleus. It carries out the reaction L-lysyl-[protein] + S-adenosyl-L-methionine = N(6)-methyl-L-lysyl-[protein] + S-adenosyl-L-homocysteine + H(+). The catalysed reaction is L-lysyl(8)-[histone H2AZ] + S-adenosyl-L-methionine = N(6)-methyl-L-lysyl(8)-[histone H2AZ] + S-adenosyl-L-homocysteine + H(+). Protein-lysine N-methyltransferase. Monomethylates 'Lys-310' of the RELA subunit of NF-kappa-B complex, leading to down-regulation of NF-kappa-B transcription factor activity. Monomethylates 'Lys-8' of H2AZ (H2AZK8me1). Required for the maintenance of embryonic stem cell self-renewal. Methylates PAK4. This chain is N-lysine methyltransferase SETD6 (Setd6), found in Rattus norvegicus (Rat).